A 370-amino-acid polypeptide reads, in one-letter code: Aminomethyltransferase (370 aa).

This sequence belongs to the GcvT family. The glycine cleavage system is composed of four proteins: P, T, L and H.

It catalyses the reaction N(6)-[(R)-S(8)-aminomethyldihydrolipoyl]-L-lysyl-[protein] + (6S)-5,6,7,8-tetrahydrofolate = N(6)-[(R)-dihydrolipoyl]-L-lysyl-[protein] + (6R)-5,10-methylene-5,6,7,8-tetrahydrofolate + NH4(+). Functionally, the glycine cleavage system catalyzes the degradation of glycine. This Clostridium botulinum (strain ATCC 19397 / Type A) protein is Aminomethyltransferase.